The sequence spans 342 residues: S-adenosylmethionine:tRNA ribosyltransferase-isomerase (342 aa).

The protein belongs to the QueA family. Monomer.

The protein resides in the cytoplasm. The enzyme catalyses 7-aminomethyl-7-carbaguanosine(34) in tRNA + S-adenosyl-L-methionine = epoxyqueuosine(34) in tRNA + adenine + L-methionine + 2 H(+). The protein operates within tRNA modification; tRNA-queuosine biosynthesis. Its function is as follows. Transfers and isomerizes the ribose moiety from AdoMet to the 7-aminomethyl group of 7-deazaguanine (preQ1-tRNA) to give epoxyqueuosine (oQ-tRNA). The chain is S-adenosylmethionine:tRNA ribosyltransferase-isomerase from Bacillus licheniformis (strain ATCC 14580 / DSM 13 / JCM 2505 / CCUG 7422 / NBRC 12200 / NCIMB 9375 / NCTC 10341 / NRRL NRS-1264 / Gibson 46).